The primary structure comprises 351 residues: Probable sugar phosphate/phosphate translocator At5g11230 (351 aa).

Helical transmembrane passes span Ile15–Tyr35, Phe49–Ile69, Val89–Tyr109, Ser113–Phe133, Asp141–Ala161, Val165–Ile185, Val205–Leu225, Ala236–Val256, Thr263–Ile283, and Thr286–Asn306. Residues Tyr38–Ala156 form the EamA domain. The interval Lys321–Asn351 is disordered.

It belongs to the TPT transporter family. TPT (TC 2.A.7.9) subfamily.

The protein localises to the membrane. In Arabidopsis thaliana (Mouse-ear cress), this protein is Probable sugar phosphate/phosphate translocator At5g11230.